The primary structure comprises 54 residues: ATP synthase F(0) complex subunit 8 (54 aa).

Residues 4–24 (LNPGPWFAILVFSWLIFLTII) form a helical membrane-spanning segment. The tract at residues 35-54 (NEPTPVSAEKHKTESWDWPW) is disordered. The span at 42–54 (AEKHKTESWDWPW) shows a compositional bias: basic and acidic residues.

This sequence belongs to the ATPase protein 8 family. As to quaternary structure, component of the ATP synthase complex composed at least of ATP5F1A/subunit alpha, ATP5F1B/subunit beta, ATP5MC1/subunit c (homooctomer), MT-ATP6/subunit a, MT-ATP8/subunit 8, ATP5ME/subunit e, ATP5MF/subunit f, ATP5MG/subunit g, ATP5MK/subunit k, ATP5MJ/subunit j, ATP5F1C/subunit gamma, ATP5F1D/subunit delta, ATP5F1E/subunit epsilon, ATP5PF/subunit F6, ATP5PB/subunit b, ATP5PD/subunit d, ATP5PO/subunit OSCP. ATP synthase complex consists of a soluble F(1) head domain (subunits alpha(3) and beta(3)) - the catalytic core - and a membrane F(0) domain - the membrane proton channel (subunits c, a, 8, e, f, g, k and j). These two domains are linked by a central stalk (subunits gamma, delta, and epsilon) rotating inside the F1 region and a stationary peripheral stalk (subunits F6, b, d, and OSCP).

The protein resides in the mitochondrion membrane. Its function is as follows. Subunit 8, of the mitochondrial membrane ATP synthase complex (F(1)F(0) ATP synthase or Complex V) that produces ATP from ADP in the presence of a proton gradient across the membrane which is generated by electron transport complexes of the respiratory chain. ATP synthase complex consist of a soluble F(1) head domain - the catalytic core - and a membrane F(1) domain - the membrane proton channel. These two domains are linked by a central stalk rotating inside the F(1) region and a stationary peripheral stalk. During catalysis, ATP synthesis in the catalytic domain of F(1) is coupled via a rotary mechanism of the central stalk subunits to proton translocation. In vivo, can only synthesize ATP although its ATP hydrolase activity can be activated artificially in vitro. Part of the complex F(0) domain. This Cyprinus carpio (Common carp) protein is ATP synthase F(0) complex subunit 8.